A 198-amino-acid polypeptide reads, in one-letter code: uncharacterized protein (198 aa).

4 consecutive transmembrane segments (helical) span residues valine 20–alanine 40, phenylalanine 70–valine 90, leucine 107–tryptophan 127, and valine 164–alanine 184.

To M.tuberculosis Rv1591.

The protein localises to the cell membrane. This is an uncharacterized protein from Mycobacterium leprae (strain TN).